The sequence spans 380 residues: MVDPVALARALIQAPSVTPMDHGCQDLLIRHLEDLGFTVHRLRFGHVENFYARLGSKGRNFTFAGHTDVVGAGDTSRWSSDPFAATLEEGYITGRGAVDMKGGLACMVAATARFLAARPHFAQQHSLSFLITGDEEGDALDGTLKVLQWLESQQEKMDYCLVGEPTSAAQLGDCIKNGRRGSVNGRLTIRGVQGHVAYPHLVDNPIHRAAPVLAAISSMTFDQGDRFFQPTSLQFTAVQSGGSATNVVPGELTAGFNIRFSAMHTPESLEARIRQVLDGAEVDYDLQMMTSGLPFITEGGPLVEAVKATVAQVTGLEPQLSTGGGTSDARFISRHCVQTVEFGLVGSTMHKVDERVPVADLEVLTEVYRRLLERLYPPQG.

H66 serves as a coordination point for Zn(2+). D68 is an active-site residue. D99 lines the Zn(2+) pocket. The active-site Proton acceptor is E135. Zn(2+) contacts are provided by E136, E164, and H350.

Belongs to the peptidase M20A family. DapE subfamily. In terms of assembly, homodimer. Requires Zn(2+) as cofactor. It depends on Co(2+) as a cofactor.

The enzyme catalyses N-succinyl-(2S,6S)-2,6-diaminopimelate + H2O = (2S,6S)-2,6-diaminopimelate + succinate. The protein operates within amino-acid biosynthesis; L-lysine biosynthesis via DAP pathway; LL-2,6-diaminopimelate from (S)-tetrahydrodipicolinate (succinylase route): step 3/3. In terms of biological role, catalyzes the hydrolysis of N-succinyl-L,L-diaminopimelic acid (SDAP), forming succinate and LL-2,6-diaminopimelate (DAP), an intermediate involved in the bacterial biosynthesis of lysine and meso-diaminopimelic acid, an essential component of bacterial cell walls. The sequence is that of Succinyl-diaminopimelate desuccinylase from Magnetococcus marinus (strain ATCC BAA-1437 / JCM 17883 / MC-1).